A 305-amino-acid chain; its full sequence is tRNA uridine(34) hydroxylase (305 aa).

The 95-residue stretch at 125-219 (ADENTVVVDT…YLEEVPREQS (95 aa)) folds into the Rhodanese domain. C179 (cysteine persulfide intermediate) is an active-site residue.

It belongs to the TrhO family.

The catalysed reaction is uridine(34) in tRNA + AH2 + O2 = 5-hydroxyuridine(34) in tRNA + A + H2O. Functionally, catalyzes oxygen-dependent 5-hydroxyuridine (ho5U) modification at position 34 in tRNAs. The chain is tRNA uridine(34) hydroxylase from Brucella canis (strain ATCC 23365 / NCTC 10854 / RM-666).